The chain runs to 338 residues: Sorting nexin-15 (338 aa).

The PX domain occupies 1–131; that stretch reads MSRRAKKDDF…EFFRGGEVTR (131 aa). Residues Arg52, Ser54, Arg88, and Arg97 each contribute to the a 1,2-diacyl-sn-glycero-3-phospho-(1D-myo-inositol-3-phosphate) site. Arg106 carries the post-translational modification Omega-N-methylarginine. The interval 134-155 is disordered; that stretch reads EVSRDLQILPPPLIPTPPSDEA. Over residues 142–151 the composition is skewed to pro residues; the sequence is LPPPLIPTPP. Residues Ser202 and Ser228 each carry the phosphoserine modification. The tract at residues 240 to 270 is disordered; that stretch reads VQSKRLDQEPWEPGGREEEEAEDGDPAPAYL. In terms of domain architecture, MIT spans 266 to 338; it reads APAYLGQATE…RAETLHAHLP (73 aa).

It belongs to the sorting nexin family. Homodimer. Interacts with SNX1, SNX2 and SNX4.

It localises to the cytoplasm. The protein localises to the membrane. Its subcellular location is the cytoplasmic vesicle membrane. In terms of biological role, may be involved in several stages of intracellular trafficking. Overexpression of SNX15 disrupts the normal trafficking of proteins from the plasma membrane to recycling endosomes or the TGN. The sequence is that of Sorting nexin-15 (Snx15) from Rattus norvegicus (Rat).